The primary structure comprises 291 residues: Bis(5'-nucleosyl)-tetraphosphatase, symmetrical (291 aa).

This sequence belongs to the Ap4A hydrolase family.

The enzyme catalyses P(1),P(4)-bis(5'-adenosyl) tetraphosphate + H2O = 2 ADP + 2 H(+). In terms of biological role, hydrolyzes diadenosine 5',5'''-P1,P4-tetraphosphate to yield ADP. The chain is Bis(5'-nucleosyl)-tetraphosphatase, symmetrical from Coxiella burnetii (strain CbuG_Q212) (Coxiella burnetii (strain Q212)).